Here is an 875-residue protein sequence, read N- to C-terminus: Phosphoenolpyruvate carboxylase (875 aa).

Catalysis depends on residues His-137 and Lys-542.

This sequence belongs to the PEPCase type 1 family. It depends on Mg(2+) as a cofactor.

It catalyses the reaction oxaloacetate + phosphate = phosphoenolpyruvate + hydrogencarbonate. In terms of biological role, forms oxaloacetate, a four-carbon dicarboxylic acid source for the tricarboxylic acid cycle. The polypeptide is Phosphoenolpyruvate carboxylase (Pseudomonas putida (strain GB-1)).